Consider the following 231-residue polypeptide: 5'-methylthioadenosine/S-adenosylhomocysteine nucleosidase (231 aa).

The active-site Proton acceptor is E12. Substrate is bound by residues G78, V153, and 174–175; that span reads ME. Residue D198 is the Proton donor of the active site.

This sequence belongs to the PNP/UDP phosphorylase family. MtnN subfamily.

It catalyses the reaction S-adenosyl-L-homocysteine + H2O = S-(5-deoxy-D-ribos-5-yl)-L-homocysteine + adenine. The catalysed reaction is S-methyl-5'-thioadenosine + H2O = 5-(methylsulfanyl)-D-ribose + adenine. It carries out the reaction 5'-deoxyadenosine + H2O = 5-deoxy-D-ribose + adenine. Its pathway is amino-acid biosynthesis; L-methionine biosynthesis via salvage pathway; S-methyl-5-thio-alpha-D-ribose 1-phosphate from S-methyl-5'-thioadenosine (hydrolase route): step 1/2. Catalyzes the irreversible cleavage of the glycosidic bond in both 5'-methylthioadenosine (MTA) and S-adenosylhomocysteine (SAH/AdoHcy) to adenine and the corresponding thioribose, 5'-methylthioribose and S-ribosylhomocysteine, respectively. Also cleaves 5'-deoxyadenosine, a toxic by-product of radical S-adenosylmethionine (SAM) enzymes, into 5-deoxyribose and adenine. The chain is 5'-methylthioadenosine/S-adenosylhomocysteine nucleosidase from Vibrio vulnificus (strain YJ016).